The chain runs to 335 residues: Glycerol-3-phosphate dehydrogenase [NAD(P)+] (335 aa).

Lysine 109 is a binding site for NADPH. 3 residues coordinate sn-glycerol 3-phosphate: lysine 109, glycine 141, and serine 143. Alanine 145 serves as a coordination point for NADPH. Sn-glycerol 3-phosphate-binding residues include lysine 196, aspartate 249, serine 259, arginine 260, and asparagine 261. Lysine 196 acts as the Proton acceptor in catalysis. Position 260 (arginine 260) interacts with NADPH. Glutamate 283 contacts NADPH.

It belongs to the NAD-dependent glycerol-3-phosphate dehydrogenase family.

The protein localises to the cytoplasm. The enzyme catalyses sn-glycerol 3-phosphate + NAD(+) = dihydroxyacetone phosphate + NADH + H(+). The catalysed reaction is sn-glycerol 3-phosphate + NADP(+) = dihydroxyacetone phosphate + NADPH + H(+). It functions in the pathway membrane lipid metabolism; glycerophospholipid metabolism. Functionally, catalyzes the reduction of the glycolytic intermediate dihydroxyacetone phosphate (DHAP) to sn-glycerol 3-phosphate (G3P), the key precursor for phospholipid synthesis. The sequence is that of Glycerol-3-phosphate dehydrogenase [NAD(P)+] from Mycoplasma mobile (strain ATCC 43663 / 163K / NCTC 11711) (Mesomycoplasma mobile).